The sequence spans 261 residues: uncharacterized protein (261 aa).

Belongs to the BtpA family.

This is an uncharacterized protein from Methanocaldococcus jannaschii (strain ATCC 43067 / DSM 2661 / JAL-1 / JCM 10045 / NBRC 100440) (Methanococcus jannaschii).